Here is a 139-residue protein sequence, read N- to C-terminus: uncharacterized protein (139 aa).

Residues 77 to 97 (YCFFFFLVLFLNGIIATRGKA) traverse the membrane as a helical segment.

Its subcellular location is the mitochondrion membrane. This is an uncharacterized protein from Arabidopsis thaliana (Mouse-ear cress).